A 143-amino-acid polypeptide reads, in one-letter code: Large ribosomal subunit protein uL15 (143 aa).

The disordered stretch occupies residues 1–56; that stretch reads MQLNSIKPAAGAKHAKRRVGRGIGSGLGKTAGRGHKGQKSRAGGYHKVGFEGGQMP. Residues 21–31 show a composition bias toward gly residues; sequence RGIGSGLGKTA.

This sequence belongs to the universal ribosomal protein uL15 family. Part of the 50S ribosomal subunit.

Its function is as follows. Binds to the 23S rRNA. The polypeptide is Large ribosomal subunit protein uL15 (Verminephrobacter eiseniae (strain EF01-2)).